A 154-amino-acid chain; its full sequence is Nucleoside diphosphate kinase A1 (154 aa).

6 residues coordinate ATP: Lys-13, Phe-61, Arg-89, Thr-95, Arg-106, and Asn-116. The active-site Pros-phosphohistidine intermediate is the His-119.

Belongs to the NDK family. Mg(2+) is required as a cofactor.

It localises to the cytoplasm. It catalyses the reaction a 2'-deoxyribonucleoside 5'-diphosphate + ATP = a 2'-deoxyribonucleoside 5'-triphosphate + ADP. The catalysed reaction is a ribonucleoside 5'-diphosphate + ATP = a ribonucleoside 5'-triphosphate + ADP. In terms of biological role, major role in the synthesis of nucleoside triphosphates other than ATP. The ATP gamma phosphate is transferred to the NDP beta phosphate via a ping-pong mechanism, using a phosphorylated active-site intermediate. This Xenopus laevis (African clawed frog) protein is Nucleoside diphosphate kinase A1.